A 363-amino-acid polypeptide reads, in one-letter code: Carbamoyl phosphate synthase small chain (363 aa).

Residues 1-172 (MTKRILMLED…AFASPGDGKR (172 aa)) are CPSase. L-glutamine contacts are provided by Ser46, Gly220, and Gly222. The 188-residue stretch at 172–359 (RVVLVDYGVK…MEMMNGKEEG (188 aa)) folds into the Glutamine amidotransferase type-1 domain. The active-site Nucleophile is Cys247. 5 residues coordinate L-glutamine: Leu248, Gln251, Asn289, Gly291, and Tyr292. Residues His332 and Glu334 contribute to the active site.

It belongs to the CarA family. As to quaternary structure, composed of two chains; the small (or glutamine) chain promotes the hydrolysis of glutamine to ammonia, which is used by the large (or ammonia) chain to synthesize carbamoyl phosphate. Tetramer of heterodimers (alpha,beta)4.

The catalysed reaction is hydrogencarbonate + L-glutamine + 2 ATP + H2O = carbamoyl phosphate + L-glutamate + 2 ADP + phosphate + 2 H(+). It carries out the reaction L-glutamine + H2O = L-glutamate + NH4(+). The protein operates within amino-acid biosynthesis; L-arginine biosynthesis; carbamoyl phosphate from bicarbonate: step 1/1. Its pathway is pyrimidine metabolism; UMP biosynthesis via de novo pathway; (S)-dihydroorotate from bicarbonate: step 1/3. In terms of biological role, small subunit of the glutamine-dependent carbamoyl phosphate synthetase (CPSase). CPSase catalyzes the formation of carbamoyl phosphate from the ammonia moiety of glutamine, carbonate, and phosphate donated by ATP, constituting the first step of 2 biosynthetic pathways, one leading to arginine and/or urea and the other to pyrimidine nucleotides. The small subunit (glutamine amidotransferase) binds and cleaves glutamine to supply the large subunit with the substrate ammonia. The sequence is that of Carbamoyl phosphate synthase small chain from Listeria monocytogenes serovar 1/2a (strain ATCC BAA-679 / EGD-e).